A 75-amino-acid chain; its full sequence is Small ribosomal subunit protein bS21B (75 aa).

Positions 33–52 (RRSYEKPSERRAREKAEAVR) are enriched in basic and acidic residues. Residues 33–75 (RRSYEKPSERRAREKAEAVRRARKLARKQAQREGLLPGKKRAA) form a disordered region.

Belongs to the bacterial ribosomal protein bS21 family.

This chain is Small ribosomal subunit protein bS21B, found in Chelativorans sp. (strain BNC1).